Consider the following 351-residue polypeptide: Modulator of apoptosis 1 (351 aa).

The LIR motif lies at 49 to 52 (YRLL). The tract at residues 120-127 (LTRALAHE) is BH3-like. Residues 202–205 (KRRR) are RASSF1-binding.

This sequence belongs to the PNMA family. Homodimer. Under normal circumstances, held in an inactive conformation by an intramolecular interaction. Interacts with BAX. Binding to RASSF1 isoform A (RASSF1A) relieves this inhibitory interaction and allows further binding to BAX. Also binds to BCL2 and BCLX. Recruited to the TNFRSF1A and TNFRSF10A complexes in response to their respective cognate ligand, after internalization. Interacts with TRIM39. Interacts with RASSF6. Interacts with ATG8 proteins MAP1LC3A, MAP1LC3B and MAP1LC3C. Does not interact with ATG8 proteins GABARAPL1, GABARAPL2 and GABARAP. Interacts with SQSTM1; promoting dissociation of SQSTM1 inclusion bodies that sequester KEAP1. Ubiquitinated and degraded during mitotic exit by APC/C-Cdh1, this modification is inhibited by TRIM39.

The protein localises to the cytoplasm. The protein resides in the cytosol. It is found in the mitochondrion outer membrane. It localises to the extracellular vesicle membrane. Its function is as follows. Retrotransposon-derived protein that forms virion-like capsids. Acts as an effector of BAX during apoptosis: enriched at outer mitochondria membrane and associates with BAX upon induction of apoptosis, facilitating BAX-dependent mitochondrial outer membrane permeabilization and apoptosis. Required for death receptor-dependent apoptosis. When associated with RASSF1, promotes BAX conformational change and translocation to mitochondrial membranes in response to TNF and TNFSF10 stimulation. Also promotes autophagy: promotes phagophore closure via association with ATG8 proteins. Acts as an inhibitor of the NFE2L2/NRF2 pathway via interaction with SQSTM1: interaction promotes dissociation of SQSTM1 inclusion bodies that sequester KEAP1, relieving inactivation of the BCR(KEAP1) complex. This is Modulator of apoptosis 1 from Macaca fascicularis (Crab-eating macaque).